The following is a 1267-amino-acid chain: Clustered mitochondria protein homolog (1267 aa).

7 TPR repeats span residues 64 to 102 (YNLK…KPYN), 420 to 453 (YSFV…LNML), 716 to 749 (EAHE…MIKE), 795 to 830 (LVPL…IPAL), 904 to 939 (RSIC…KSRA), 1010 to 1043 (AEKY…YERV), and 1138 to 1171 (AYIK…FTKE). The region spanning 329–586 (PTNGPDYLRT…NTYPLDVEFA (258 aa)) is the Clu domain. The segment covering 1203–1219 (QQDQTAASGLKQQPQKS) has biased composition (polar residues). The segment at 1203–1267 (QQDQTAASGL…KSKSKGKNKK (65 aa)) is disordered. Basic and acidic residues predominate over residues 1224–1239 (NKKETTNPDLADKSVD). Residues 1254–1267 (KTTKKSKSKGKNKK) show a composition bias toward basic residues.

Belongs to the CLU family. May associate with the eukaryotic translation initiation factor 3 (eIF-3) complex.

It is found in the cytoplasm. In terms of biological role, mRNA-binding protein involved in proper cytoplasmic distribution of mitochondria. The polypeptide is Clustered mitochondria protein homolog (Candida glabrata (strain ATCC 2001 / BCRC 20586 / JCM 3761 / NBRC 0622 / NRRL Y-65 / CBS 138) (Yeast)).